Reading from the N-terminus, the 340-residue chain is Glycerol-3-phosphate dehydrogenase [NAD(P)+] (340 aa).

Positions 15, 16, 36, and 110 each coordinate NADPH. Residues Lys110, Gly139, and Thr141 each contribute to the sn-glycerol 3-phosphate site. An NADPH-binding site is contributed by Ala143. Residues Lys195, Asp248, Ser258, Arg259, and Asn260 each contribute to the sn-glycerol 3-phosphate site. The active-site Proton acceptor is the Lys195. Arg259 serves as a coordination point for NADPH. Positions 283 and 285 each coordinate NADPH.

The protein belongs to the NAD-dependent glycerol-3-phosphate dehydrogenase family.

Its subcellular location is the cytoplasm. The catalysed reaction is sn-glycerol 3-phosphate + NAD(+) = dihydroxyacetone phosphate + NADH + H(+). It carries out the reaction sn-glycerol 3-phosphate + NADP(+) = dihydroxyacetone phosphate + NADPH + H(+). The protein operates within membrane lipid metabolism; glycerophospholipid metabolism. Its function is as follows. Catalyzes the reduction of the glycolytic intermediate dihydroxyacetone phosphate (DHAP) to sn-glycerol 3-phosphate (G3P), the key precursor for phospholipid synthesis. The chain is Glycerol-3-phosphate dehydrogenase [NAD(P)+] from Baumannia cicadellinicola subsp. Homalodisca coagulata.